The chain runs to 930 residues: MSVITAAPLLALLREDDHTVKSYALHSINEVVDQLWSEVSNDITDIEALYEDSKFEDRKLAALVVSKIYYNLGEYESAVRYALAAEEYFDINEKSRYVETIVSQSIEMYIKLATENYGKEKSEIDLQLVSIFERMLNKCITAGEYKLALGIALESYRLDVVTNILTQQTSEPNMLKLITYVLIAATTTVSNTHFKINILYALFDILIRLKAPDYFAVSKIIVNLNDSKLAARLFDKLVSEKNTEIAYQIAFDLVTSASQGLLNELVATLSTGEGNDRLVEILSGLPTCDFYNTFLHANKRIDRSLLNKSKSSMDGKFSLFHTAVSVSNAFMHAGTTDDTFVRANLQWLGKAQNWAKFTATASLGIIHQGNLTGGKKIMEPYLPGSRASSRYIKGGSLYGLGLIYAGYGKEIIGYLKDQIVENSSNATDDDVDVLLHGASLGIGLAGMSSNSTEIFEALKEVLYADSANSGAAAALGIGLTMLGSGDETVAENLYTYAQETSHGEITKGLAIALALLNYGREELADETIKKMLEHENDSMRYGAVYTIALAYAGTSSNEAVKKLLHVAVSDSNDDVRRASVTALGFVLIRDYTTVPRIVELLSESHNPHVRCGTAFALGVACAGRGLQAAIDVLEPLTNDPVDFVRQAAMIALSMILIQQTEKTNVKVRDVNEQLRNVIANKHQEGLAKFGACVAQGIINAGGRNVTIQLENSEMGTLNTKSVIGLAMFTQFWYWFPLAHFLSLSFTPTTTIGVRSHDLKIPKFSFHCHTKEGIFDYPPMFEEDIDKSIEKVATAVLSTTAKAKARAKKSKKDKAVEPDKSKEEIKVENEQRDKKEHDADVPEEEFKIKYTSTYYKVENMTRVVPQQLKYIAFPKDERFTPVRKFKGSNGVIVLSDKTPDEPVEVIKTVRQEKETDAPLPAPFKVQDDLEF.

10 PC repeats span residues 358–391 (TATASLGIIHQGNLTGGKKIMEPYLPGSRASSRY), 395–428 (GSLYGLGLIYAGYGKEIIGYLKDQIVENSSNATD), 437–471 (GASLGIGLAGMSSNSTEIFEALKEVLYADSANSGA), 472–506 (AAALGIGLTMLGSGDETVAENLYTYAQETSHGEIT), 508–541 (GLAIALALLNYGREELADETIKKMLEHENDSMRY), 542–577 (GAVYTIALAYAGTSSNEAVKKLLHVAVSDSNDDVRR), 578–610 (ASVTALGFVLIRDYTTVPRIVELLSESHNPHVR), 612–646 (GTAFALGVACAGRGLQAAIDVLEPLTNDPVDFVRQ), 647–684 (AAMIALSMILIQQTEKTNVKVRDVNEQLRNVIANKHQE), and 690–722 (GACVAQGIINAGGRNVTIQLENSEMGTLNTKSV). 2 disordered regions span residues 806-840 (AKKSKKDKAVEPDKSKEEIKVENEQRDKKEHDADV) and 911-930 (EKETDAPLPAPFKVQDDLEF). Residues 812–840 (DKAVEPDKSKEEIKVENEQRDKKEHDADV) show a composition bias toward basic and acidic residues.

It belongs to the proteasome subunit S1 family.

In terms of biological role, acts as a regulatory subunit of the 26S proteasome which is involved in the ATP-dependent degradation of ubiquitinated proteins. This chain is 26S proteasome regulatory subunit RPN2 (RPN2), found in Eremothecium gossypii (strain ATCC 10895 / CBS 109.51 / FGSC 9923 / NRRL Y-1056) (Yeast).